The sequence spans 377 residues: Lactosylceramide 1,3-N-acetyl-beta-D-glucosaminyltransferase (377 aa).

At M1 to Q12 the chain is on the cytoplasmic side. Residues F13–V30 form a helical; Signal-anchor for type II membrane protein membrane-spanning segment. The Lumenal portion of the chain corresponds to Q31–S377. Residues N56, N167, and N275 are each glycosylated (N-linked (GlcNAc...) asparagine).

This sequence belongs to the glycosyltransferase 31 family.

The protein localises to the golgi apparatus membrane. The enzyme catalyses a beta-D-Gal-(1-&gt;4)-beta-D-Glc-(1&lt;-&gt;1)-Cer(d18:1(4E)) + UDP-N-acetyl-alpha-D-glucosamine = a beta-D-GlcNAc-(1-&gt;3)-beta-D-Gal-(1-&gt;4)-beta-D-Glc-(1&lt;-&gt;1)-Cer(d18:1(4E)) + UDP + H(+). It catalyses the reaction a neolactoside nLc4Cer(d18:1(4E)) + UDP-N-acetyl-alpha-D-glucosamine = a neolactoside IV(3)-beta-GlcNAc-nLc4Cer(d18:1(4E)) + UDP + H(+). Its pathway is protein modification; protein glycosylation. In terms of biological role, beta-1,3-N-acetylglucosaminyltransferase that plays a key role in the synthesis of lacto- or neolacto-series carbohydrate chains on glycolipids. This Xenopus tropicalis (Western clawed frog) protein is Lactosylceramide 1,3-N-acetyl-beta-D-glucosaminyltransferase (b3gnt5).